The following is a 90-amino-acid chain: Arminin 7722 (90 aa).

The signal sequence occupies residues 1–18; sequence MRSASLILFVAIVALTYA. Residues 19–59 constitute a propeptide that is removed on maturation; sequence RSYEDIKEEIRNEVENEILDDLEEENDELDDNAQEVSDPRA. A Threonine amide modification is found at Thr-87.

The protein belongs to the arminin family. Expressed in entodermal epithelium along the body column.

The protein resides in the secreted. It localises to the target cell membrane. In terms of biological role, antimicrobial peptide with a broad-spectrum antimicrobial activity. Keeps its antibacterial activity under a wide range of salt concentrations that mimic physiological conditions of human blood, which is surprising, since Hydra is an obligate freshwater animal with nearly no salt tolerance. Does not affect red blood cells. This is Arminin 7722 from Hydra vulgaris (Hydra).